The sequence spans 407 residues: Peptide chain release factor subunit 1 (407 aa).

It belongs to the eukaryotic release factor 1 family. In terms of assembly, heterodimer of two subunits, one of which binds GTP.

The protein resides in the cytoplasm. Functionally, directs the termination of nascent peptide synthesis (translation) in response to the termination codons UAA, UAG and UGA. The polypeptide is Peptide chain release factor subunit 1 (prf1) (Archaeoglobus fulgidus (strain ATCC 49558 / DSM 4304 / JCM 9628 / NBRC 100126 / VC-16)).